The following is a 512-amino-acid chain: Cytochrome P450 84A4 (512 aa).

A helical transmembrane segment spans residues L7–R24. C447 lines the heme pocket.

The protein belongs to the cytochrome P450 family. The cofactor is heme. As to expression, expressed in seedlings, roots, stems and inflorescence nodes. Low or no expression in leaves, flowers, seeds and lignifying tissue.

It localises to the membrane. Cytochrome P450 involved in the production of catechol-substituted substrates needed for the arabidopyrones biosynthesis. Converts p-coumaraldehyde into caffealdehyde. The polypeptide is Cytochrome P450 84A4 (CYP84A4) (Arabidopsis thaliana (Mouse-ear cress)).